Consider the following 71-residue polypeptide: Prokaryotic ubiquitin-like protein Pup (71 aa).

The disordered stretch occupies residues 1 to 30 (MPSASGHHQIPAETQRHDDDQTQETAQGLS). Residues 23–56 (QETAQGLSAAAMLAQEQADDLDAILDDIETVLET) adopt a coiled-coil conformation. The ARC ATPase binding stretch occupies residues 27–65 (QGLSAAAMLAQEQADDLDAILDDIETVLETNAEEYVSSF). E71 is covalently cross-linked (Isoglutamyl lysine isopeptide (Glu-Lys) (interchain with K-? in acceptor proteins)).

Belongs to the prokaryotic ubiquitin-like protein family. Strongly interacts with the proteasome-associated ATPase ARC through a hydrophobic interface; the interacting region of Pup lies in its C-terminal half. There is one Pup binding site per ARC hexamer ring.

It functions in the pathway protein degradation; proteasomal Pup-dependent pathway. Protein modifier that is covalently attached to lysine residues of substrate proteins, thereby targeting them for proteasomal degradation. The tagging system is termed pupylation. The chain is Prokaryotic ubiquitin-like protein Pup from Bifidobacterium animalis subsp. lactis (strain AD011).